Consider the following 385-residue polypeptide: Putative actin-25 (385 aa).

This sequence belongs to the actin family.

It is found in the cytoplasm. The protein localises to the cytoskeleton. The catalysed reaction is ATP + H2O = ADP + phosphate + H(+). Functionally, actins are highly conserved proteins that are involved in various types of cell motility and are ubiquitously expressed in all eukaryotic cells. Multiple isoforms are involved in various cellular functions such as cytoskeleton structure, cell mobility, chromosome movement and muscle contraction. This is Putative actin-25 (act25) from Dictyostelium discoideum (Social amoeba).